Consider the following 808-residue polypeptide: uncharacterized protein (808 aa).

Positions 6–41 (SRSEKVKRIFQQFDGNHDGGLNREEMAALVVAVNPR) constitute an EF-hand 1 domain. TPR repeat units follow at residues 234–267 (FDGHMAIGRVLYEHQLFKEALVSFKRACELQPTD), 269–301 (RPHFKAGNCLYVLGKCKESKDEFLLALEAAESG), 310–343 (PQIYVNLGIALEGEGMVLSACEYYREAAILCPTH), 344–377 (FRALKLLGSALFGVGEYRAAVKALEEAIYLKPDY), 378–411 (ADAHCDLASSLHSMGEDERAIEVFQRAIDLKPGH), 412–445 (VDALYNLGGLYMDLGRFQRASEMYTRVLTVWPNH), and 447–479 (RAQLNKAVSLLGAGETEEAKRALKEALKLTNRV). In terms of domain architecture, EF-hand 2 spans 600 to 635 (AIKAINEKILALLDDSGSGRVDMGMFYAVIAPLCGG). Positions 773-794 (FKQEEYKFREYESEAEAMKAKC) form a coiled coil.

This is an uncharacterized protein from Arabidopsis thaliana (Mouse-ear cress).